The chain runs to 801 residues: Vacuolar transporter chaperone complex subunit 4 (801 aa).

At 1–692 (MPFSKAWRSA…MLKWTEHATR (692 aa)) the chain is on the cytoplasmic side. ATP-binding residues include Lys-215, Arg-286, Arg-288, Lys-312, Lys-325, and Arg-391. Glu-441 serves as a coordination point for Mn(2+). Residue Lys-473 is part of the active site. A helical transmembrane segment spans residues 693–713 (LGLVGLGVIQFGNSMTLPGDV). Over 714–723 (TQLSSFWRAN) the chain is Vacuolar. A helical transmembrane segment spans residues 724–744 (FHIVLGIALVLVALMTLMYAL). Topologically, residues 745-768 (MTFKARSRRVYARKKIRFDDSWGP) are cytoplasmic. The helical transmembrane segment at 769–789 (TVLTVFLAFGICVIAMMHILG) threads the bilayer. Residues 790–801 (RYGPMLTGDDNF) lie on the Vacuolar side of the membrane.

Belongs to the VTC4 family. The VTC core complex is an integral membrane heterooligomer composed of at least the catalytic subunit vtc4 and the accessory subunits vtc1 and vtc2. vtc1 is a small membrane protein without hydrophilic domain. Vtc2 and vtc4 are related and have 2 hydrophilic domains that face the cytosol, an N-terminal SPX domain and the central core domain. The central core in vtc4 is the catalytic domain. It depends on Mn(2+) as a cofactor.

Its subcellular location is the acidocalcisome membrane. The catalysed reaction is [phosphate](n) + ATP = [phosphate](n+1) + ADP. Activity of the enzyme is Mn(2+)-dependent and enhanced in the presence of pyrophosphate (PPi). Functionally, component of a polyphosphate synthase complex that utilizes ATP to synthesize and translocate polyphosphate to acidocalcisomes in epimastigotes, insect-stages of Trypanosoma brucei. Catalytic subunit of the vacuolar transporter chaperone (VTC) complex. The VTC complex acts as a vacuolar polyphosphate polymerase that catalyzes the synthesis of inorganic polyphosphate (polyP) via transfer of phosphate from ATP to a growing polyP chain, releasing ADP. VTC exposes its catalytic domain vtc4 to the cytosol, where the growing polyP chain winds through a tunnel-shaped pocket, integrating cytoplasmic polymer synthesis with polyP membrane translocation. The VTC complex carries 9 vacuolar transmembrane domains, which are likely to constitute the translocation channel into the organelle lumen. PolyP synthesis is tightly coupled to its transport into the vacuole lumen, in order to avoid otherwise toxic intermediates in the cytosol, and it depends on the proton gradient across the membrane, formed by V-ATPase. The VTC complex also plays a role in vacuolar membrane fusion. Essential for infection and parasite survival in the mammalian host. This Trypanosoma cruzi (strain CL Brener) protein is Vacuolar transporter chaperone complex subunit 4.